Here is a 144-residue protein sequence, read N- to C-terminus: Deoxyuridine 5'-triphosphate nucleotidohydrolase (144 aa).

Substrate-binding positions include 63 to 65 (RSG), Asn76, and 80 to 82 (TVD).

It belongs to the dUTPase family. Requires Mg(2+) as cofactor.

The catalysed reaction is dUTP + H2O = dUMP + diphosphate + H(+). It participates in pyrimidine metabolism; dUMP biosynthesis; dUMP from dCTP (dUTP route): step 2/2. Functionally, this enzyme is involved in nucleotide metabolism: it produces dUMP, the immediate precursor of thymidine nucleotides and it decreases the intracellular concentration of dUTP so that uracil cannot be incorporated into DNA. In Treponema denticola (strain ATCC 35405 / DSM 14222 / CIP 103919 / JCM 8153 / KCTC 15104), this protein is Deoxyuridine 5'-triphosphate nucleotidohydrolase.